We begin with the raw amino-acid sequence, 194 residues long: ATP-dependent Clp protease proteolytic subunit (194 aa).

The active-site Nucleophile is Ser-98. Residue His-123 is part of the active site.

This sequence belongs to the peptidase S14 family. Fourteen ClpP subunits assemble into 2 heptameric rings which stack back to back to give a disk-like structure with a central cavity, resembling the structure of eukaryotic proteasomes.

It localises to the cytoplasm. It catalyses the reaction Hydrolysis of proteins to small peptides in the presence of ATP and magnesium. alpha-casein is the usual test substrate. In the absence of ATP, only oligopeptides shorter than five residues are hydrolyzed (such as succinyl-Leu-Tyr-|-NHMec, and Leu-Tyr-Leu-|-Tyr-Trp, in which cleavage of the -Tyr-|-Leu- and -Tyr-|-Trp bonds also occurs).. Its function is as follows. Cleaves peptides in various proteins in a process that requires ATP hydrolysis. Has a chymotrypsin-like activity. Plays a major role in the degradation of misfolded proteins. The sequence is that of ATP-dependent Clp protease proteolytic subunit from Actinobacillus succinogenes (strain ATCC 55618 / DSM 22257 / CCUG 43843 / 130Z).